The following is a 468-amino-acid chain: Glutamate--tRNA ligase (468 aa).

5 to 7 (RIA) provides a ligand contact to L-glutamate. Residues 8–18 (PSPTGDPHVGT) carry the 'HIGH' region motif. Residue His15 participates in ATP binding. L-glutamate is bound by residues Glu41, 187 to 191 (YHLAN), and Arg205. Residues Glu208, Leu236, 243–247 (KISKR), and Lys246 contribute to the ATP site. Residues 243–247 (KISKR) carry the 'KMSKS' region motif. The tract at residues 432–447 (QPLRAALTGSLETPGL) is interaction with tRNA.

It belongs to the class-I aminoacyl-tRNA synthetase family. Glutamate--tRNA ligase type 1 subfamily. In terms of assembly, monomer.

The protein resides in the cytoplasm. It catalyses the reaction tRNA(Glu) + L-glutamate + ATP = L-glutamyl-tRNA(Glu) + AMP + diphosphate. Its activity is regulated as follows. In the absence of bound tRNA, ATP is bound in a non-productive mode, and the enzyme cannot activate amino acids. Its function is as follows. Catalyzes the attachment of glutamate to tRNA(Glu) in a two-step reaction: glutamate is first activated by ATP to form Glu-AMP and then transferred to the acceptor end of tRNA(Glu). The sequence is that of Glutamate--tRNA ligase from Thermus thermophilus (strain ATCC 27634 / DSM 579 / HB8).